A 257-amino-acid polypeptide reads, in one-letter code: Zinc transporter ZupT (257 aa).

Transmembrane regions (helical) follow at residues 5-25 (LILTLLAGAATFIGAFLGVLG), 32-52 (VLAFSLGFAAGIMLLISLMEM), and 61-81 (GMSPVLGYGMFIIGLLGYFGL). Fe(2+) contacts are provided by Asn-120 and Glu-123. Zn(2+) contacts are provided by Glu-123 and His-148. Asn-149, Glu-152, and Glu-181 together coordinate Fe(2+). Residue Glu-152 participates in Zn(2+) binding. 3 helical membrane-spanning segments follow: residues 182–202 (IFGGVLAWLILGSLVSPIVMA), 203–223 (AIMAAVAGIMVALSVDELMPL), and 236–256 (GVLCGMSVMGLSLVILQTIGI).

It belongs to the ZIP transporter (TC 2.A.5) family. ZupT subfamily.

The protein resides in the cell inner membrane. It carries out the reaction Zn(2+)(in) = Zn(2+)(out). Its function is as follows. Mediates zinc uptake. May also transport other divalent cations. The protein is Zinc transporter ZupT of Salmonella arizonae (strain ATCC BAA-731 / CDC346-86 / RSK2980).